Here is a 208-residue protein sequence, read N- to C-terminus: Small ribosomal subunit protein uS4 (208 aa).

The S4 RNA-binding domain occupies 97–160 (TRLDNVCYRM…QKQLRVQEAL (64 aa)).

The protein belongs to the universal ribosomal protein uS4 family. Part of the 30S ribosomal subunit. Contacts protein S5. The interaction surface between S4 and S5 is involved in control of translational fidelity.

Its function is as follows. One of the primary rRNA binding proteins, it binds directly to 16S rRNA where it nucleates assembly of the body of the 30S subunit. Functionally, with S5 and S12 plays an important role in translational accuracy. The polypeptide is Small ribosomal subunit protein uS4 (Xanthomonas axonopodis pv. citri (strain 306)).